The primary structure comprises 417 residues: Maltodextrin-binding protein MdxE (417 aa).

The N-terminal stretch at 1–22 (MVLLKKGFAILAASFLAIGLAA) is a signal peptide. C23 carries N-palmitoyl cysteine lipidation. The S-diacylglycerol cysteine moiety is linked to residue C23.

It belongs to the bacterial solute-binding protein 1 family. The complex is composed of two ATP-binding proteins (MsmX), two transmembrane proteins (MdxF and MdxG) and a solute-binding protein (MdxE).

The protein resides in the cell membrane. Inhibited by glucose and lactose. Functionally, part of the ABC transporter complex involved in maltodextrin import. Binds maltodextrin. Can also bind maltose with low affinity, but is not involved in its uptake. In Bacillus subtilis (strain 168), this protein is Maltodextrin-binding protein MdxE (mdxE).